Reading from the N-terminus, the 577-residue chain is Moesin (577 aa).

The FERM domain maps to 2-295 (PKTISVRVTT…GNHELYMRRR (294 aa)). A Phosphoserine modification is found at serine 74. Lysine 79 carries the N6-acetyllysine modification. Lysine 83 is modified (N6-succinyllysine). A [IL]-x-C-x-x-[DE] motif motif is present at residues 115–120 (IYCPPE). Tyrosine 116 carries the post-translational modification Phosphotyrosine. Cysteine 117 is modified (S-nitrosocysteine). N6-acetyllysine is present on residues lysine 139 and lysine 165. Disordered stretches follow at residues 323 to 342 (LENE…KIER), 375 to 409 (LEQE…ASRD), and 466 to 518 (AMST…NERV). Over residues 375–401 (LEQERKRAQSEAEKLAKERQEAEEAKE) the composition is skewed to basic and acidic residues. The residue at position 407 (serine 407) is a Phosphoserine. The span at 476 to 487 (AENEQDEQDENG) shows a compositional bias: acidic residues. Positions 492–518 (ADLRADAMAKDRSEEERTTEAEKNERV) are enriched in basic and acidic residues. The residue at position 527 (serine 527) is a Phosphoserine. Threonine 558 is modified (phosphothreonine; by ROCK2 and STK10).

In resting T-cells, part of a PAG1-NHERF1-MSN complex which is disrupted upon TCR activation. Interacts with NHERF1. Interacts with PPP1R16B. Interacts with SELPLG and SYK; these interactions mediate the activation of SYK by SELPLG. Interacts with PDPN (via cytoplasmic domain); this interaction activates RHOA and promotes epithelial-mesenchymal transition. Interacts with SPN/CD43 cytoplasmic tail. Interacts with CD44. Interacts with ICAM2. Interacts with ICAM3 (via C-terminus). Interacts with PDZD8. Interacts with F-actin. Interacts with CD46. Interacts with PTPN6. As to quaternary structure, (Microbial infection) Interacts with HIV-1 envelope protein gp120. Phosphorylation on Thr-558 is crucial for the formation of microvilli-like structures. Phosphorylation by ROCK2 suppresses the head-to-tail association of the N-terminal and C-terminal halves resulting in an opened conformation which is capable of actin and membrane-binding. Phosphorylation on Thr-558 by STK10 negatively regulates lymphocyte migration and polarization. Post-translationally, S-nitrosylation of Cys-117 is induced by interferon-gamma and oxidatively-modified low-densitity lipoprotein (LDL(ox)) implicating the iNOS-S100A8/9 transnitrosylase complex. As to expression, in all tissues and cultured cells studied.

The protein localises to the cell membrane. It localises to the cytoplasm. It is found in the cytoskeleton. Its subcellular location is the apical cell membrane. The protein resides in the cell projection. The protein localises to the microvillus membrane. It localises to the microvillus. A head-to-tail association, of the N-terminal and C-terminal halves results in a closed conformation (inactive form) which is incapable of actin or membrane-binding. Its function is as follows. Ezrin-radixin-moesin (ERM) family protein that connects the actin cytoskeleton to the plasma membrane and thereby regulates the structure and function of specific domains of the cell cortex. Tethers actin filaments by oscillating between a resting and an activated state providing transient interactions between moesin and the actin cytoskeleton. Once phosphorylated on its C-terminal threonine, moesin is activated leading to interaction with F-actin and cytoskeletal rearrangement. These rearrangements regulate many cellular processes, including cell shape determination, membrane transport, and signal transduction. The role of moesin is particularly important in immunity acting on both T and B-cells homeostasis and self-tolerance, regulating lymphocyte egress from lymphoid organs. Modulates phagolysosomal biogenesis in macrophages. Also participates in immunologic synapse formation. The polypeptide is Moesin (Homo sapiens (Human)).